The chain runs to 436 residues: Adenosylmethionine-8-amino-7-oxononanoate aminotransferase (436 aa).

Tryptophan 56 is a substrate binding site. A pyridoxal 5'-phosphate-binding site is contributed by 114 to 115 (GS). Tyrosine 148 is a binding site for substrate. Aspartate 245 contacts pyridoxal 5'-phosphate. The substrate site is built by lysine 274, serine 309, and arginine 400. Lysine 274 is subject to N6-(pyridoxal phosphate)lysine.

The protein belongs to the class-III pyridoxal-phosphate-dependent aminotransferase family. BioA subfamily. In terms of assembly, homodimer. Pyridoxal 5'-phosphate is required as a cofactor.

The protein resides in the cytoplasm. It catalyses the reaction (8S)-8-amino-7-oxononanoate + S-adenosyl-L-methionine = S-adenosyl-4-methylsulfanyl-2-oxobutanoate + (7R,8S)-7,8-diammoniononanoate. Its pathway is cofactor biosynthesis; biotin biosynthesis; 7,8-diaminononanoate from 8-amino-7-oxononanoate (SAM route): step 1/1. Its function is as follows. Catalyzes the transfer of the alpha-amino group from S-adenosyl-L-methionine (SAM) to 7-keto-8-aminopelargonic acid (KAPA) to form 7,8-diaminopelargonic acid (DAPA). It is the only aminotransferase known to utilize SAM as an amino donor. This chain is Adenosylmethionine-8-amino-7-oxononanoate aminotransferase, found in Helicobacter pylori (strain ATCC 700392 / 26695) (Campylobacter pylori).